Here is a 261-residue protein sequence, read N- to C-terminus: Succinate dehydrogenase [ubiquinone] iron-sulfur subunit, mitochondrial (261 aa).

Positions 31-122 (FKIYRWNPDT…DVKIYPLPHM (92 aa)) constitute a 2Fe-2S ferredoxin-type domain. Residues C82, C87, C90, and C102 each coordinate [2Fe-2S] cluster. In terms of domain architecture, 4Fe-4S ferredoxin-type spans 164–194 (DRKKLDGLYECILCACCSTACPSYWWNNEQY). [4Fe-4S] cluster-binding residues include C174, C177, and C180. A [3Fe-4S] cluster-binding site is contributed by C184. W189 contributes to the a ubiquinone binding site. Residues C231 and C237 each coordinate [3Fe-4S] cluster. Position 241 (C241) interacts with [4Fe-4S] cluster.

This sequence belongs to the succinate dehydrogenase/fumarate reductase iron-sulfur protein family. In terms of assembly, component of complex II composed of four subunits: a flavoprotein (FP), an iron-sulfur protein (IP), and a cytochrome b composed of a large and a small subunit. [2Fe-2S] cluster serves as cofactor. It depends on [3Fe-4S] cluster as a cofactor. [4Fe-4S] cluster is required as a cofactor.

The protein localises to the mitochondrion inner membrane. The enzyme catalyses a quinone + succinate = fumarate + a quinol. Its pathway is carbohydrate metabolism; tricarboxylic acid cycle; fumarate from succinate (eukaryal route): step 1/1. Functionally, iron-sulfur protein (IP) subunit of succinate dehydrogenase (SDH) that is involved in complex II of the mitochondrial electron transport chain and is responsible for transferring electrons from succinate to ubiquinone (coenzyme Q). This is Succinate dehydrogenase [ubiquinone] iron-sulfur subunit, mitochondrial (SDH2) from Eremothecium gossypii (strain ATCC 10895 / CBS 109.51 / FGSC 9923 / NRRL Y-1056) (Yeast).